Reading from the N-terminus, the 85-residue chain is Large ribosomal subunit protein bL27 (85 aa).

The segment at 1 to 22 is disordered; it reads MAHKKGGGSSRNGRDSNAQRRG.

The protein belongs to the bacterial ribosomal protein bL27 family.

This Sorangium cellulosum (strain So ce56) (Polyangium cellulosum (strain So ce56)) protein is Large ribosomal subunit protein bL27.